A 211-amino-acid chain; its full sequence is uncharacterized protein (211 aa).

This is an uncharacterized protein from Methanocaldococcus jannaschii (strain ATCC 43067 / DSM 2661 / JAL-1 / JCM 10045 / NBRC 100440) (Methanococcus jannaschii).